Reading from the N-terminus, the 66-residue chain is KEGYIVNYHDGCKYECYKLGDNDYCLRECRSRYGKGAGGYCYAFGCWCTHLYEQAVVWPLPKKTCN.

In terms of domain architecture, LCN-type CS-alpha/beta spans K1–N66. 4 cysteine pairs are disulfide-bonded: C12/C65, C16/C41, C25/C46, and C29/C48. N66 carries the post-translational modification Asparagine amide.

Belongs to the long (4 C-C) scorpion toxin superfamily. Sodium channel inhibitor family. Beta subfamily. As to expression, expressed by the venom gland.

The protein resides in the secreted. Beta toxins bind voltage-independently at site-4 of sodium channels (Nav) and shift the voltage of activation toward more negative potentials thereby affecting sodium channel activation and promoting spontaneous and repetitive firing. Lethal to mice. The polypeptide is Beta-toxin Ct71 (Centruroides tecomanus (Scorpion)).